The sequence spans 526 residues: Phenylacetaldehyde oxime monooxygenase CYP71AN24 (526 aa).

The helical transmembrane segment at 22–42 (SFNIFLVPILCLSIFILFSLT) threads the bilayer. Position 465 (cysteine 465) interacts with heme.

Belongs to the cytochrome P450 family. It depends on heme as a cofactor. Expressed in seedlings and leaves.

Its subcellular location is the membrane. The catalysed reaction is (E)-phenylacetaldehyde oxime + reduced [NADPH--hemoprotein reductase] + O2 = (R)-mandelonitrile + oxidized [NADPH--hemoprotein reductase] + 2 H2O + H(+). The enzyme catalyses phenylacetonitrile + reduced [NADPH--hemoprotein reductase] + O2 = (R)-mandelonitrile + oxidized [NADPH--hemoprotein reductase] + H2O + H(+). Functionally, involved in L-phenylalanine-derived cyanogenic glycoside biosynthesis, including prunasin and amygdalin defensive agents. Catalyzes the conversion of phenylacetaldoxime (PAOx) and phenylacetonitrile (PAN) into mandelonitrile (MAN). To a lower extent, can convert various aromatic aldoximes and nitriles; mediates the transformation of 4-hydroxyphenylacetaldoxime, 4-hydroxyphenylacetonitrile, indole-3-acetal-doxime and indole-3-acetonitrile into the corresponding hydroxynitriles, but cannot use the aliphatic compounds 2-methylpropanaloxime and 2-methylpropanenitrile as substrates. This Prunus mume (Japanese apricot) protein is Phenylacetaldehyde oxime monooxygenase CYP71AN24.